A 206-amino-acid polypeptide reads, in one-letter code: MARKKQSGGRKVEGWKAKNWYKVHAPEFLGKQFIGEIISSNPENVPGRVLTVSLGELIQDYSKQNVRASFKIMNVAGDAAYTQFNGHEMTKEFVRAMVKKRASRVDSTITVTPLGSTRELQVTITAFTINHARLSQVQELRAKMVKVVEDSAKEADFESFVSAMLKGELSKKMFAECKPIFPVRRIEIIKSESVSSAADRAAALIR.

It belongs to the eukaryotic ribosomal protein eS1 family.

The protein is Small ribosomal subunit protein eS1 of Methanocorpusculum labreanum (strain ATCC 43576 / DSM 4855 / Z).